We begin with the raw amino-acid sequence, 64 residues long: Large ribosomal subunit protein bL35 (64 aa).

It belongs to the bacterial ribosomal protein bL35 family.

The polypeptide is Large ribosomal subunit protein bL35 (Shewanella loihica (strain ATCC BAA-1088 / PV-4)).